Reading from the N-terminus, the 785-residue chain is E3 UFM1-protein ligase 1 homolog (785 aa).

Positions 404-482 (NASFQDQDDD…AGGGGGNKKT (79 aa)) are disordered.

The protein belongs to the UFL1 family.

Its function is as follows. E3 UFM1-protein ligase that mediates ufmylation of target proteins. In Drosophila persimilis (Fruit fly), this protein is E3 UFM1-protein ligase 1 homolog.